We begin with the raw amino-acid sequence, 258 residues long: Tryptophan synthase alpha chain (258 aa).

Active-site proton acceptor residues include Glu52 and Asp63.

It belongs to the TrpA family. In terms of assembly, tetramer of two alpha and two beta chains.

The enzyme catalyses (1S,2R)-1-C-(indol-3-yl)glycerol 3-phosphate + L-serine = D-glyceraldehyde 3-phosphate + L-tryptophan + H2O. It participates in amino-acid biosynthesis; L-tryptophan biosynthesis; L-tryptophan from chorismate: step 5/5. Functionally, the alpha subunit is responsible for the aldol cleavage of indoleglycerol phosphate to indole and glyceraldehyde 3-phosphate. The polypeptide is Tryptophan synthase alpha chain (Streptococcus pneumoniae (strain P1031)).